Consider the following 874-residue polypeptide: Probable inorganic carbon transporter subunit DabA (874 aa).

Zn(2+) contacts are provided by cysteine 398, aspartate 400, histidine 580, and cysteine 595.

Belongs to the inorganic carbon transporter (TC 9.A.2) DabA family. In terms of assembly, forms a complex with DabB. It depends on Zn(2+) as a cofactor.

The protein localises to the cell membrane. In terms of biological role, part of an energy-coupled inorganic carbon pump. The sequence is that of Probable inorganic carbon transporter subunit DabA from Bacillus anthracis (strain A0248).